Consider the following 325-residue polypeptide: Biotin synthase (325 aa).

In terms of domain architecture, Radical SAM core spans phenylalanine 49–arginine 278. Positions 67, 71, and 74 each coordinate [4Fe-4S] cluster. Residues serine 111, cysteine 143, cysteine 203, and arginine 273 each coordinate [2Fe-2S] cluster.

This sequence belongs to the radical SAM superfamily. Biotin synthase family. In terms of assembly, homodimer. It depends on [4Fe-4S] cluster as a cofactor. Requires [2Fe-2S] cluster as cofactor.

The enzyme catalyses (4R,5S)-dethiobiotin + (sulfur carrier)-SH + 2 reduced [2Fe-2S]-[ferredoxin] + 2 S-adenosyl-L-methionine = (sulfur carrier)-H + biotin + 2 5'-deoxyadenosine + 2 L-methionine + 2 oxidized [2Fe-2S]-[ferredoxin]. Its pathway is cofactor biosynthesis; biotin biosynthesis; biotin from 7,8-diaminononanoate: step 2/2. In terms of biological role, catalyzes the conversion of dethiobiotin (DTB) to biotin by the insertion of a sulfur atom into dethiobiotin via a radical-based mechanism. The protein is Biotin synthase of Clostridium tetani (strain Massachusetts / E88).